Consider the following 508-residue polypeptide: Probable cytochrome P450 6d5 (508 aa).

Residue cysteine 453 coordinates heme.

Belongs to the cytochrome P450 family. Requires heme as cofactor.

It localises to the endoplasmic reticulum membrane. Its subcellular location is the microsome membrane. Its function is as follows. May be involved in the metabolism of insect hormones and in the breakdown of synthetic insecticides. The sequence is that of Probable cytochrome P450 6d5 (Cyp6d5) from Drosophila melanogaster (Fruit fly).